A 386-amino-acid polypeptide reads, in one-letter code: Phosphoglycerate kinase (386 aa).

Substrate is bound by residues aspartate 21–asparagine 23, arginine 36, histidine 59–arginine 62, arginine 113, and arginine 146. ATP-binding positions include lysine 197, glutamate 314, and glycine 340–threonine 343.

It belongs to the phosphoglycerate kinase family. In terms of assembly, monomer.

It is found in the cytoplasm. The enzyme catalyses (2R)-3-phosphoglycerate + ATP = (2R)-3-phospho-glyceroyl phosphate + ADP. The protein operates within carbohydrate degradation; glycolysis; pyruvate from D-glyceraldehyde 3-phosphate: step 2/5. This chain is Phosphoglycerate kinase, found in Azotobacter vinelandii (strain DJ / ATCC BAA-1303).